The sequence spans 495 residues: Transmembrane protein 161A (495 aa).

The signal sequence occupies residues 1 to 28 (MALMGVQLVVSLLAVSIMQRMAPHLSFA). The Extracellular portion of the chain corresponds to 29 to 99 (RWLLCNGSLL…VNVMDALVLR (71 aa)). Asparagine 34 carries N-linked (GlcNAc...) asparagine glycosylation. A helical membrane pass occupies residues 100–120 (FFVEYQWLIDFAVYATGIYLF). Residues 121-135 (TEGYYSVVDASKEVN) are Cytoplasmic-facing. Residues 136-156 (IASIWCVLTVLFCLRTLYLLM) traverse the membrane as a helical segment. Over 157 to 167 (SHYFLSEEGGE) the chain is Extracellular. Residues 168-188 (RSVCLAFGFLSLLIAMLVLVV) traverse the membrane as a helical segment. At 189–227 (REDYLEFGLEPGFTSLFDNFEVFARKQGYEWSVPFTKLS) the chain is on the cytoplasmic side. The helical transmembrane segment at 228–248 (VKLGLAVICAFIGALLAFPGL) threads the bilayer. Topologically, residues 249-265 (RLAQTHLDAVQMNADRP) are extracellular. Residues 266–286 (MIQILLHMSFLSPLVIIVMWI) form a helical membrane-spanning segment. The Cytoplasmic segment spans residues 287–305 (KPIARDFLGNAPMGKTSVT). Residues 306-326 (LLSSSAFSSVRLWTIVVLCVL) traverse the membrane as a helical segment. Over 327-367 (RLLLTRYHLQAYLNLAQKWVEQMKKEAGRIAAIDIQRKVTR) the chain is Extracellular. The chain crosses the membrane as a helical span at residues 368-388 (IFCYLTVVTLQYLIPILLVLF). At 389–465 (STLALKSLGD…ALLTPIFFRG (77 aa)) the chain is on the cytoplasmic side. Residues 466 to 486 (IFAFLTWWVAACQLISSLFGI) form a helical membrane-spanning segment. Residues 487 to 495 (YFHQYLMHN) are Extracellular-facing.

It belongs to the TMEM161 family.

The protein localises to the membrane. Functionally, may play a role in protection against oxidative stress. This chain is Transmembrane protein 161A (tmem161a), found in Danio rerio (Zebrafish).